Reading from the N-terminus, the 373-residue chain is WAT1-related protein At4g08300 (373 aa).

The next 10 helical transmembrane spans lie at Pro11–Val31, Ile41–Leu61, Pro67–Leu87, Thr102–Phe122, Ile139–Ile159, Trp185–Leu205, Leu219–Val239, Ala255–Ile275, Val281–Val301, and Ile306–Trp326. 2 EamA domains span residues Ala23–Met151 and Thr198–Val325.

This sequence belongs to the drug/metabolite transporter (DMT) superfamily. Plant drug/metabolite exporter (P-DME) (TC 2.A.7.4) family.

The protein localises to the membrane. The polypeptide is WAT1-related protein At4g08300 (Arabidopsis thaliana (Mouse-ear cress)).